Reading from the N-terminus, the 2434-residue chain is Protein Ycf2 (2434 aa).

Residue 1693–1700 coordinates ATP; sequence GPTETGRS.

The protein belongs to the Ycf2 family.

Its subcellular location is the plastid. It is found in the chloroplast stroma. Probable ATPase of unknown function. Its presence in a non-photosynthetic plant (Epifagus virginiana) and experiments in tobacco indicate that it has an essential function which is probably not related to photosynthesis. This is Protein Ycf2 from Cycas taitungensis (Prince sago).